Here is a 408-residue protein sequence, read N- to C-terminus: Multidrug resistance protein MdtG (408 aa).

11 consecutive transmembrane segments (helical) span residues 16–36 (LIVAWLGCFLTGAAFSLVMPF), 58–78 (IVFSITFLFSAIASPFWGGLA), 92–112 (LGMGIVMILMGMAQNIWQFLI), 115–135 (ALLGLLGGFVPNANALIATQV), 146–166 (TLSTGGVSGALLGPLAGGLLA), 173–193 (PVFFITASVLMLCFVVTLLCI), 224–244 (LFVTTMIIQIASGSIAPILTL), 253–273 (VGNIAFISGMIASVPGVAALL), 290–310 (ILIAALIFSVLLLIPMSFVQT), 319–339 (FLLGAADGALLPAVQTLLVYN), and 378–398 (AVFLVTACVVLFNIIYSWNSL).

The protein belongs to the major facilitator superfamily. DHA1 family. MdtG (TC 2.A.1.2.20) subfamily.

The protein resides in the cell inner membrane. Confers resistance to fosfomycin and deoxycholate. In Escherichia fergusonii (strain ATCC 35469 / DSM 13698 / CCUG 18766 / IAM 14443 / JCM 21226 / LMG 7866 / NBRC 102419 / NCTC 12128 / CDC 0568-73), this protein is Multidrug resistance protein MdtG.